Consider the following 206-residue polypeptide: Small ribosomal subunit protein uS4 (206 aa).

Residues 96-156 (GRLDNVVYRM…EKAKKQSRVK (61 aa)) enclose the S4 RNA-binding domain.

Belongs to the universal ribosomal protein uS4 family. As to quaternary structure, part of the 30S ribosomal subunit. Contacts protein S5. The interaction surface between S4 and S5 is involved in control of translational fidelity.

Its function is as follows. One of the primary rRNA binding proteins, it binds directly to 16S rRNA where it nucleates assembly of the body of the 30S subunit. With S5 and S12 plays an important role in translational accuracy. The chain is Small ribosomal subunit protein uS4 from Klebsiella pneumoniae (strain 342).